Reading from the N-terminus, the 343-residue chain is Tetraacyldisaccharide 4'-kinase (343 aa).

47–54 (SVGGTGKT) contacts ATP.

Belongs to the LpxK family.

The catalysed reaction is a lipid A disaccharide + ATP = a lipid IVA + ADP + H(+). It participates in glycolipid biosynthesis; lipid IV(A) biosynthesis; lipid IV(A) from (3R)-3-hydroxytetradecanoyl-[acyl-carrier-protein] and UDP-N-acetyl-alpha-D-glucosamine: step 6/6. Transfers the gamma-phosphate of ATP to the 4'-position of a tetraacyldisaccharide 1-phosphate intermediate (termed DS-1-P) to form tetraacyldisaccharide 1,4'-bis-phosphate (lipid IVA). The protein is Tetraacyldisaccharide 4'-kinase of Flavobacterium psychrophilum (strain ATCC 49511 / DSM 21280 / CIP 103535 / JIP02/86).